The chain runs to 229 residues: PKHD-type hydroxylase RPA3479 (229 aa).

In terms of domain architecture, Fe2OG dioxygenase spans 78–180 (QIFPPLFNRY…RVASFFWLQS (103 aa)). Fe cation contacts are provided by His98, Asp100, and His161. Arg171 contacts 2-oxoglutarate.

It depends on Fe(2+) as a cofactor. L-ascorbate serves as cofactor.

This is PKHD-type hydroxylase RPA3479 from Rhodopseudomonas palustris (strain ATCC BAA-98 / CGA009).